The primary structure comprises 376 residues: Succinyl-diaminopimelate desuccinylase (376 aa).

Residue histidine 67 coordinates Zn(2+). Aspartate 69 is a catalytic residue. Aspartate 100 contacts Zn(2+). The Proton acceptor role is filled by glutamate 134. Glutamate 135, glutamate 163, and histidine 349 together coordinate Zn(2+).

This sequence belongs to the peptidase M20A family. DapE subfamily. As to quaternary structure, homodimer. Zn(2+) is required as a cofactor. Requires Co(2+) as cofactor.

The catalysed reaction is N-succinyl-(2S,6S)-2,6-diaminopimelate + H2O = (2S,6S)-2,6-diaminopimelate + succinate. It participates in amino-acid biosynthesis; L-lysine biosynthesis via DAP pathway; LL-2,6-diaminopimelate from (S)-tetrahydrodipicolinate (succinylase route): step 3/3. Functionally, catalyzes the hydrolysis of N-succinyl-L,L-diaminopimelic acid (SDAP), forming succinate and LL-2,6-diaminopimelate (DAP), an intermediate involved in the bacterial biosynthesis of lysine and meso-diaminopimelic acid, an essential component of bacterial cell walls. This chain is Succinyl-diaminopimelate desuccinylase, found in Proteus mirabilis (strain HI4320).